Reading from the N-terminus, the 175-residue chain is NADH-ubiquinone oxidoreductase chain 6 (175 aa).

Helical transmembrane passes span 1–21, 25–45, 47–67, 88–108, and 149–169; these read MMTYIVFILSVIFVIGFVGFS, SPIYGGLVLIVSGGVGCGIIM, FGGSFLGLMVFLIYLGGMLVV, TVMGVFLLGLLMEVMLVLYVL, and YGAWVVVVTGWSLLVGVLVIL.

The protein belongs to the complex I subunit 6 family. In terms of assembly, core subunit of respiratory chain NADH dehydrogenase (Complex I) which is composed of 45 different subunits.

The protein resides in the mitochondrion inner membrane. The enzyme catalyses a ubiquinone + NADH + 5 H(+)(in) = a ubiquinol + NAD(+) + 4 H(+)(out). Core subunit of the mitochondrial membrane respiratory chain NADH dehydrogenase (Complex I) which catalyzes electron transfer from NADH through the respiratory chain, using ubiquinone as an electron acceptor. Essential for the catalytic activity and assembly of complex I. This Equus asinus (Donkey) protein is NADH-ubiquinone oxidoreductase chain 6 (MT-ND6).